Reading from the N-terminus, the 380-residue chain is Lipid-A-disaccharide synthase (380 aa).

Belongs to the LpxB family.

It carries out the reaction a lipid X + a UDP-2-N,3-O-bis[(3R)-3-hydroxyacyl]-alpha-D-glucosamine = a lipid A disaccharide + UDP + H(+). The protein operates within bacterial outer membrane biogenesis; LPS lipid A biosynthesis. Its function is as follows. Condensation of UDP-2,3-diacylglucosamine and 2,3-diacylglucosamine-1-phosphate to form lipid A disaccharide, a precursor of lipid A, a phosphorylated glycolipid that anchors the lipopolysaccharide to the outer membrane of the cell. The chain is Lipid-A-disaccharide synthase from Francisella tularensis subsp. novicida (strain U112).